A 24-amino-acid polypeptide reads, in one-letter code: Chlorate reductase subunit beta (24 aa).

Heterotrimer of alpha, beta and gamma subunits. The cofactor is [3Fe-4S] cluster. [4Fe-4S] cluster is required as a cofactor.

The protein localises to the cytoplasm. Electron transfer subunit of the chlorate reductase. The sequence is that of Chlorate reductase subunit beta from Stutzerimonas chloritidismutans (Pseudomonas chloritidismutans).